The sequence spans 1019 residues: Photoactivated adenylate cyclase subunit alpha-like protein 1224-5/1F (1019 aa).

The region spanning 55-148 is the BLUF 1 domain; that stretch reads LRRLMYLSAS…GRMYGWWHLK (94 aa). The Guanylate cyclase 1 domain maps to 204 to 332; that stretch reads VVTVIYLVEF…DWINSASRIT (129 aa). The region spanning 467–559 is the BLUF 2 domain; it reads LITLTYISQA…GVYGSPLDMT (93 aa). A Guanylate cyclase 2 domain is found at 615–744; that stretch reads VMLATAISSF…EVRARVLEVE (130 aa). Residues 825–863 form a disordered region; the sequence is NISCRGGNPPAGGIPTSPKVRPPGRTNSVSSYTPDPKQA.

Belongs to the adenylyl cyclase class-4/guanylyl cyclase family. As to quaternary structure, heterotetramer of two alpha and two beta subunits.

Its subcellular location is the cell projection. It localises to the cilium. The protein resides in the flagellum. The polypeptide is Photoactivated adenylate cyclase subunit alpha-like protein 1224-5/1F (Euglena gracilis).